The sequence spans 250 residues: Beta-crystallin B1 (250 aa).

Positions 1 to 47 are disordered; sequence MSQVAKAAATTAVNPGPDGKGKGTPSTGTAPAPGPTPVPASVPRPAA. N-acetylserine is present on Ser2. An N-terminal arm region spans residues 2–56; sequence SQVAKAAATTAVNPGPDGKGKGTPSTGTAPAPGPTPVPASVPRPAAKVGELPPGS. Pro residues predominate over residues 32-42; it reads APGPTPVPASV. 2 Beta/gamma crystallin 'Greek key' domains span residues 57–96 and 97–141; these read YRLV…IVLS and GPWV…RPIR. Residues 142–146 are connecting peptide; sequence MDSQE. Beta/gamma crystallin 'Greek key' domains lie at 147–188 and 189–231; these read HKIC…TVSS and GTWV…RRLR. Positions 233-250 are C-terminal arm; it reads RQWHQEGCFPVLTAEPPK.

The protein belongs to the beta/gamma-crystallin family. In terms of assembly, homo/heterodimer, or complexes of higher-order. The structure of beta-crystallin oligomers seems to be stabilized through interactions between the N-terminal arms. In terms of processing, specific cleavages in the N-terminal arm occur during lens maturation and give rise to truncated forms, leading to impaired oligomerization and protein insolubilization. The protease responsible for this partial degradation could be calpain II.

Crystallins are the dominant structural components of the vertebrate eye lens. This Rattus norvegicus (Rat) protein is Beta-crystallin B1 (Crybb1).